A 456-amino-acid chain; its full sequence is MSLSKLSQKCFSRHHARTFIRFSSSDFQSLLGPPRVPNPYADSGRNKFAAPIVPINVNNHGNVFASIKVPINETPEAVAFKPEVEEAPRVEKVEVEATKIETEKVASSPAPATPPSAIDELNSLKDSLSKLEEAAASKTSAPSGSSGDNNDQPGNAEEVEARRKRMERNTRIGGYVLLGGSVIGFISFCFYYGRAQRDEAGNVIADEFSGSFLAPFYRIANSFKLWKDYVVEPAREQLLPDPLPAPYLQPKYTIVIELKNILVHPEWTYKTGYRFLKRPALDYFLDVIGYPNFEVVIYSSESMMTAAPVVDSFDQKQRIMYKLFRDCTKYMNGHHVKDLSKLNRDLSKVIYIDFDAKSGQLNPENMLRVPEWRGNMDDTSLVDLAELLKTIHLSDAEDVRPMLQYYSQYDDPAKEFRRRAVYLAQQEEQKKQQPDDSSMLKRYSGRLFGFRRHASA.

Residues 1–22 constitute a mitochondrion transit peptide; that stretch reads MSLSKLSQKCFSRHHARTFIRF. Residues 23–171 are Mitochondrial matrix-facing; that stretch reads SSSDFQSLLG…RRKRMERNTR (149 aa). Disordered stretches follow at residues 101-120 and 132-165; these read ETEK…AIDE and EEAA…RRKR. Residues 137–153 show a composition bias toward polar residues; that stretch reads SKTSAPSGSSGDNNDQP. Residues 172–192 traverse the membrane as a helical segment; that stretch reads IGGYVLLGGSVIGFISFCFYY. Over 193 to 456 the chain is Mitochondrial intermembrane; that stretch reads GRAQRDEAGN…LFGFRRHASA (264 aa). Residues 247–391 form the FCP1 homology domain; it reads YLQPKYTIVI…VDLAELLKTI (145 aa).

Belongs to the TIM50 family. In terms of assembly, component of the TIM23 complex at least composed of tim-23, tim-17 and tim-50.

The protein localises to the mitochondrion inner membrane. Functionally, essential component of the TIM23 complex, a complex that mediates the translocation of transit peptide-containing proteins across the mitochondrial inner membrane. This Caenorhabditis briggsae protein is Mitochondrial import inner membrane translocase subunit TIM50 (scpl-4).